Consider the following 573-residue polypeptide: Pentatricopeptide repeat-containing protein At3g62890 (573 aa).

10 PPR repeats span residues 23–60 (ESFLWNIIIRAIVHNVSSPQRHSPISVYLRMRNHRVSP), 61–95 (DFHTFPFLLPSFHNPLHLPLGQRTHAQILLFGLDK), 96–126 (DPFVRTSLLNMYSSCGDLRSAQRVFDDSGSK), 127–161 (DLPAWNSVVNAYAKAGLIDDARKLFDEMPERNVIS), 162–188 (WSCLINGYVMCGKYKEALDLFREMQLP), 198–232 (NEFTMSTVLSACGRLGALEQGKWVHAYIDKYHVEI), 233–263 (DIVLGTALIDMYAKCGSLERAKRVFNALGSK), 265–295 (DVKAYSAMICCLAMYGLTDECFQLFSEMTTS), 301–336 (NSVTFVGILGACVHRGLINEGKSYFKMMIEEFGITP), and 337–367 (SIQHYGCMVDLYGRSGLIKEAESFIASMPME). The segment at 372–447 (IWGSLLSGSR…VPGCSYVEVE (76 aa)) is type E motif; degenerate. Residues 448 to 478 (GVVHEFVVGDESQQESERIYAMLDEIMQRLR) form a type E(+) motif region. Residues 479-573 (EAGYVTDTKE…DGSCSCRDFW (95 aa)) form a type DYW motif region.

This sequence belongs to the PPR family. PCMP-H subfamily.

The polypeptide is Pentatricopeptide repeat-containing protein At3g62890 (PCMP-H82) (Arabidopsis thaliana (Mouse-ear cress)).